A 315-amino-acid polypeptide reads, in one-letter code: Protein ADP-ribosyltransferase (315 aa).

A Deacetylase sirtuin-type domain is found at 13-299; the sequence is LMDEKTKQAE…TTALRNDSTT (287 aa). Residues Ala40, 123–126, and Gln143 each bind NAD(+); that span reads TNAD. Zn(2+) is bound by residues Cys151, Cys155, Cys186, and Cys189. NAD(+) is bound by residues 238-240, Asn264, Tyr268, and Ile285; that span reads YTT.

It belongs to the sirtuin family. Class M subfamily. It depends on Zn(2+) as a cofactor.

It carries out the reaction L-aspartyl-[protein] + NAD(+) = 4-O-(ADP-D-ribosyl)-L-aspartyl-[protein] + nicotinamide. Its activity is regulated as follows. Is inhibited by Tenovin-6 in vitro, but not by nicotinamide. In terms of biological role, catalyzes specifically the mono-ADP-ribosylation of GcvH-L (SAV0324). This activity is dependent on prior lipoylation of the target protein. May be involved in the modulation of the response to host-derived oxidative stress. In contrast to other sirtuin classes, lacks protein deacylase activity, being unable to catalyze delipoylation, debiotinylation, deacetylation and desuccinylation of proteins. This Staphylococcus aureus (strain Mu50 / ATCC 700699) protein is Protein ADP-ribosyltransferase.